The sequence spans 561 residues: MNINVADLLNGNYILLLFVVLALGLCLGKLRLGSVQLGNSIGVLVVSLLLGQQHFSINTDALNLGFMLFIFCVGVEAGPNFFSIFFRDGKNYLMLALVMVGSALLIALGLGKLFGWDIGLTAGMLAGSMTSTPVLVGAGDTLRHSGMESSQLSVALDNLSLGYALTYLIGLVSLIVGARYLPKLQHQDLQTSAQQIARERGLDTDANRKVYLPVIRAYRVGPELVAWADGKNLRELGIYRQTGCYIERIRRNGILANPDGDAVLQMGDEIALVGYPDAHARLDPSFRNGKEVFDRDLLDMRIVTEEIVVKNHNAVGRRLAQLKLTDHGCFLNRVIRSQIEMPIDDNVVLNKGDVLQVSGDARRVKTVADRIGFISIHSQVTDLLAFCAFFIIGLMIGMITFQFSNFSFGIGNAAGLLFAGIMLGFLRANHPTFGYIPQGALNMVKEFGLMVFMAGVGLSAGSGIGNGLGAVGGQMLIAGLVVSLVPVIICFLFGAYVLRMNRALLFGAMMGARTCAPAMEIISDTARSNIPALGYAGTYAIANVLLTLAGTLIVIIWPGLG.

The next 5 membrane-spanning stretches (helical) occupy residues 8–28 (LLNGNYILLLFVVLALGLCLG), 32–52 (LGSVQLGNSIGVLVVSLLLGQ), 66–86 (FMLFIFCVGVEAGPNFFSIFF), 94–114 (MLALVMVGSALLIALGLGKLF), and 158–178 (NLSLGYALTYLIGLVSLIVGA). 2 RCK C-terminal domains span residues 200–288 (RGLD…SFRN) and 292–373 (VFDR…RIGF). Helical transmembrane passes span 383–403 (LLAFCAFFIIGLMIGMITFQF), 406–426 (FSFGIGNAAGLLFAGIMLGFL), 447–467 (FGLMVFMAGVGLSAGSGIGNG), 475–495 (MLIAGLVVSLVPVIICFLFGA), and 540–560 (AIANVLLTLAGTLIVIIWPGL).

It belongs to the AAE transporter (TC 2.A.81) family. YbjL subfamily.

It is found in the cell membrane. The polypeptide is Putative transport protein CKO_02260 (Citrobacter koseri (strain ATCC BAA-895 / CDC 4225-83 / SGSC4696)).